The following is a 168-amino-acid chain: Desumoylating isopeptidase 1 (168 aa).

In terms of domain architecture, PPPDE spans 7 to 149 (YPVKLYVYDL…FGQALRPLLD (143 aa)). The active site involves histidine 38. A Nuclear export signal 1 motif is present at residues 83–91 (IFLEYLSSL). Cysteine 108 is an active-site residue. The short motif at 139–153 (PFGQALRPLLDSIQI) is the Nuclear export signal 2 element.

It belongs to the DeSI family. In terms of assembly, homodimer. Interacts with UBQLN4; leading to the export of UBQLN4 from the nucleus.

The protein resides in the cytoplasm. The protein localises to the nucleus. It carries out the reaction S-hexadecanoyl-L-cysteinyl-[protein] + H2O = L-cysteinyl-[protein] + hexadecanoate + H(+). With respect to regulation, palmostatin B inhibits its palmitoyl protein thioesterase activity. Protease which deconjugates SUMO1, SUMO2 and SUMO3 from some substrate proteins. Has isopeptidase but not SUMO-processing activity. Desumoylates ZBTB46. Collaborates with UBQLN4 in the export of ubiquitinated proteins from the nucleus to the cytoplasm. Exhibits palmitoyl protein thioesterase (S-depalmitoylation) activity towards synthetic substrates 4-methylumbelliferyl-6-S-palmitoyl-beta-D-glucopyranoside and S-depalmitoylation probe 5 (DPP-5). In Homo sapiens (Human), this protein is Desumoylating isopeptidase 1.